Consider the following 603-residue polypeptide: Elongation factor 4 (603 aa).

The tr-type G domain occupies 7–191; sequence DNIRNFSIVA…AIVTRLPPPQ (185 aa). Residues 19–24 and 138–141 each bind GTP; these read DHGKST and NKVD.

This sequence belongs to the TRAFAC class translation factor GTPase superfamily. Classic translation factor GTPase family. LepA subfamily.

Its subcellular location is the cell inner membrane. The enzyme catalyses GTP + H2O = GDP + phosphate + H(+). Required for accurate and efficient protein synthesis under certain stress conditions. May act as a fidelity factor of the translation reaction, by catalyzing a one-codon backward translocation of tRNAs on improperly translocated ribosomes. Back-translocation proceeds from a post-translocation (POST) complex to a pre-translocation (PRE) complex, thus giving elongation factor G a second chance to translocate the tRNAs correctly. Binds to ribosomes in a GTP-dependent manner. In Rhodopseudomonas palustris (strain HaA2), this protein is Elongation factor 4.